Here is a 214-residue protein sequence, read N- to C-terminus: Thymidylate kinase (214 aa).

9–16 (GVDGSGKS) lines the ATP pocket.

This sequence belongs to the thymidylate kinase family.

The catalysed reaction is dTMP + ATP = dTDP + ADP. In terms of biological role, phosphorylation of dTMP to form dTDP in both de novo and salvage pathways of dTTP synthesis. This Symbiobacterium thermophilum (strain DSM 24528 / JCM 14929 / IAM 14863 / T) protein is Thymidylate kinase.